The primary structure comprises 522 residues: Occludin (522 aa).

The segment at M1–N20 is disordered. The Cytoplasmic segment spans residues M1–R66. An MARVEL domain is found at S60–R269. The chain crosses the membrane as a helical span at residues I67–W89. Over D90–R135 the chain is Extracellular. Residues A136–V160 traverse the membrane as a helical segment. Residues I161–R170 are Cytoplasmic-facing. A helical transmembrane segment spans residues Y171–M195. Topologically, residues G196–E243 are extracellular. C216 and C237 are joined by a disulfide. Residues A244–V265 form a helical membrane-spanning segment. Residues K266–T522 lie on the Cytoplasmic side of the membrane. A Phosphoserine modification is found at S302. Phosphothreonine is present on T305. Phosphoserine occurs at positions 313, 321, and 340. The interval V360–E407 is disordered. The segment covering R367 to T376 has biased composition (polar residues). Y368 carries the post-translational modification Phosphotyrosine. Residues S369 and S370 each carry the phosphoserine modification. The span at A381 to S390 shows a compositional bias: basic residues. Residues K391 to T400 show a composition bias toward basic and acidic residues. Residues Y398 and Y402 each carry the phosphotyrosine modification. T403 and T404 each carry phosphothreonine; by PKC/PRKCH. S408 is modified (phosphoserine). The OCEL domain occupies E414–T522. A coiled-coil region spans residues D426–G489. S490 is modified (phosphoserine).

This sequence belongs to the ELL/occludin family. Interacts with TJP1/ZO1. Interacts with VAPA. Interacts with CLDN1, CLDN6, CLDN9, CLDN11, CLDN12 and CLDN17. Interacts with PLSCR1. Interacts with LSR, ILDR1 and ILDR2. Interacts with TJP2/ZO2. Dephosphorylated by PTPRJ. The tyrosine phosphorylation on Tyr-398 and Tyr-402 reduces its ability to interact with TJP1. Phosphorylation at Ser-490 also attenuates the interaction with TJP1. In terms of processing, (Microbial infection) Cleaved by S.pyogenes SpeB protease; leading to its degradation. Degradation by SpeB promotes bacterial translocation across the host epithelial barrier. In terms of tissue distribution, localized at tight junctions of both epithelial and endothelial cells. Highly expressed in kidney. Not detected in testis.

The protein resides in the cell membrane. Its subcellular location is the cell junction. It is found in the tight junction. May play a role in the formation and regulation of the tight junction (TJ) paracellular permeability barrier. It is able to induce adhesion when expressed in cells lacking tight junctions. Functionally, (Microbial infection) Acts as a coreceptor for hepatitis C virus (HCV) in hepatocytes. The chain is Occludin (OCLN) from Homo sapiens (Human).